The sequence spans 217 residues: Ras-related protein Rab-39A (217 aa).

The GTP site is built by serine 17, glycine 20, lysine 21, serine 22, cysteine 23, and threonine 44. Serine 22 is a binding site for Mg(2+). The interval 39-47 is switch-I; it reads PACDPTVGV. Positions 44 and 68 each coordinate Mg(2+). GTP contacts are provided by glycine 71, histidine 127, lysine 128, aspartate 130, alanine 158, and lysine 159. Residues 71 to 87 are switch-II; sequence GQERFRSITRSYYRNSV. Residues cysteine 215 and cysteine 217 are each lipidated (S-geranylgeranyl cysteine). Cysteine 217 is modified (cysteine methyl ester).

It belongs to the small GTPase superfamily. Rab family. In terms of assembly, interacts (GDP-bound) with C9orf72; C9orf72 acts as a GEF for RAB39A. Interacts (GTP-bound) with HOPS complex components VPS39 and VPS41, and STX17; interaction between HOPS components and RAB39A contributes to obtaining a functional HOPS complex that promotes membrane fusion driven by STX17-SNAP29-VAMP8. Interacts with BECN1. Probably associates with the PI3K (PI3KC3/PI3K-III/class III phosphatidylinositol 3-kinase) complex. Interacts with UACA. Interacts with isoform a of RASSF1. Does not interact with isoform c of RASSF1. Mg(2+) is required as a cofactor. Prenylated. Prenylation is required for association with cellular membranes.

The protein resides in the cell membrane. Its subcellular location is the cytoplasmic vesicle. It is found in the phagosome membrane. It localises to the late endosome membrane. The protein localises to the lysosome membrane. The protein resides in the autolysosome membrane. The catalysed reaction is GTP + H2O = GDP + phosphate + H(+). Its activity is regulated as follows. Regulated by guanine nucleotide exchange factors (GEFs) including c9Orf72, which promote the exchange of bound GDP for free GTP. Regulated by GTPase activating proteins (GAPs) which increase the GTP hydrolysis activity. Inhibited by GDP dissociation inhibitors (GDIs). Functionally, the small GTPases Rab are key regulators of intracellular membrane trafficking, from the formation of transport vesicles to their fusion with membranes. Rabs cycle between an inactive GDP-bound form and an active GTP-bound form that is able to recruit to membranes different sets of downstream effectors directly responsible for vesicle formation, movement, tethering and fusion. RAB39A regulates autophagosome-lysosome fusion via recruitment of the HOPS endosomal tethering complex onto lysosomes; this process involves lysosomal RAB39A and autophagosomal RAB2A recruitment of HOPS subcomplexes VPS41-VPS16-VPS18-VPS33A and VPS39-VPS11, respectively, which assemble into a functional complex to mediate membrane tethering and SNAREs-driven membrane fusion. Also negatively regulates lipopolysaccharide (LPS)-induced autophagosome formation in macrophages, possibly by implicating PI3K. Promotes the delivery of MHC-I molecules from the ER to phagosomes and the generation of peptide-loaded MHC-I complexes in phagosomes, thus enhancing antigen cross-presentation by dendritic cells. Plays a role in the maturation and acidification of phagosomes that engulf pathogens, such as S.aureus and M.tuberculosis. Plays a role in the fusion of phagosomes with lysosomes. May be involved in multiple neurite formation. The polypeptide is Ras-related protein Rab-39A (Mus musculus (Mouse)).